The primary structure comprises 116 residues: Omega-ctenitoxin-Pn3a (116 aa).

An N-terminal signal peptide occupies residues 1 to 19; the sequence is MKMKLLGIILLVSFPFVLG. Residues 20-38 constitute a propeptide that is removed on maturation; that stretch reads FAGIPIEEGENSVEVGEVE. Intrachain disulfides connect C41–C58, C48–C64, C55–C90, C57–C78, C66–C76, C96–C102, and C106–C111. H115 is subject to Histidine amide.

This sequence belongs to the neurotoxin 04 (omega-agtx) family. 03 (type II/III omega-agtx) subfamily. Expressed by the venom gland.

It is found in the secreted. Functionally, this toxin is a potent and practically irreversible antagonist of both Cav2.1/CACNA1A and Cav2.2/CACNA1B calcium channels, while it displays a partial and rapidly reversible block of Cav2.3/CACNA1E calcium channels and no effect on Cav3/CACNA1 calcium channels. Inhibits glutamate uptake from rat brain synaptosomes by an interaction between cysteines from both glutamate transporter and toxin. Blocks potassium-induced exocytosis of synaptic vesicles in brain cortical synaptosomes (IC(50)=1.1 nM). In rat brain, inhibits glutamate release, neuronal death and loss of neurotransmission in the hippocampus resulting from ischemia. In vivo, induces rapid general flaccid paralysis followed by death in 10-30 minutes at dose levels of 5 ug per mouse. The polypeptide is Omega-ctenitoxin-Pn3a (Phoneutria nigriventer (Brazilian armed spider)).